We begin with the raw amino-acid sequence, 492 residues long: Probable cytochrome P450 313a3 (492 aa).

Residue Cys-438 participates in heme binding.

Belongs to the cytochrome P450 family. Heme is required as a cofactor.

It is found in the endoplasmic reticulum membrane. The protein localises to the microsome membrane. In terms of biological role, may be involved in the metabolism of insect hormones and in the breakdown of synthetic insecticides. This is Probable cytochrome P450 313a3 (Cyp313a3) from Drosophila melanogaster (Fruit fly).